Here is a 301-residue protein sequence, read N- to C-terminus: Chitin deacetylase 1 (301 aa).

Residues 1–24 (MKIFNTIQSVLFAAFFLKQGNCLA) form the signal peptide. N-linked (GlcNAc...) asparagine glycans are attached at residues asparagine 26, asparagine 50, and asparagine 68. Residues cysteine 107 and cysteine 290 are joined by a disulfide bond. Positions 108–288 (FKLSQTFDDG…LIGSDQLTIA (181 aa)) constitute a NodB homology domain. Catalysis depends on aspartate 115, which acts as the Proton acceptor. Aspartate 115 serves as a coordination point for acetate. The Co(2+) site is built by aspartate 116, histidine 162, and histidine 166. A glycan (N-linked (GlcNAc...) asparagine) is linked at asparagine 189. Tyrosine 203 contacts acetate. Histidine 263 functions as the Proton donor in the catalytic mechanism.

The protein belongs to the polysaccharide deacetylase family. It depends on Co(2+) as a cofactor.

Its subcellular location is the prospore. The catalysed reaction is [(1-&gt;4)-N-acetyl-beta-D-glucosaminyl](n) + n H2O = chitosan + n acetate. Its function is as follows. Hydrolyzes the N-acetamido groups of N-acetyl-D-glucosamine residues in chitin to form chitosan and acetate. Chitosan is a component of the spore wall. The protein is Chitin deacetylase 1 of Saccharomyces cerevisiae (strain ATCC 204508 / S288c) (Baker's yeast).